A 191-amino-acid polypeptide reads, in one-letter code: Cytochrome c oxidase assembly protein CtaG (191 aa).

The Cytoplasmic portion of the chain corresponds to 1 to 9; sequence MALNGPQKT. A helical; Signal-anchor for type II membrane protein transmembrane segment spans residues 10–30; that stretch reads VVQLVSVVVVMGGLAWASVPF. The Periplasmic portion of the chain corresponds to 31 to 191; it reads YDWFCRVTGF…LDAGEKTNTN (161 aa).

This sequence belongs to the COX11/CtaG family.

The protein localises to the cell inner membrane. In terms of biological role, exerts its effect at some terminal stage of cytochrome c oxidase synthesis, probably by being involved in the insertion of the copper B into subunit I. The protein is Cytochrome c oxidase assembly protein CtaG of Ruegeria pomeroyi (strain ATCC 700808 / DSM 15171 / DSS-3) (Silicibacter pomeroyi).